An 820-amino-acid polypeptide reads, in one-letter code: DNA mismatch repair protein MutS (820 aa).

An ATP-binding site is contributed by 615–622 (GPNMAGKS).

Belongs to the DNA mismatch repair MutS family.

This protein is involved in the repair of mismatches in DNA. It is possible that it carries out the mismatch recognition step. This protein has a weak ATPase activity. The chain is DNA mismatch repair protein MutS from Anaplasma phagocytophilum (strain HZ).